The chain runs to 327 residues: Malate dehydrogenase (327 aa).

11-17 (GAAGQIG) contributes to the NAD(+) binding site. Residues Arg92 and Arg98 each coordinate substrate. NAD(+) is bound by residues Asn105, Gln112, and 129–131 (VGN). The substrate site is built by Asn131 and Arg162. The active-site Proton acceptor is the His187.

It belongs to the LDH/MDH superfamily. MDH type 2 family.

The catalysed reaction is (S)-malate + NAD(+) = oxaloacetate + NADH + H(+). Its function is as follows. Catalyzes the reversible oxidation of malate to oxaloacetate. The protein is Malate dehydrogenase of Leptospira biflexa serovar Patoc (strain Patoc 1 / Ames).